The primary structure comprises 327 residues: MAVYTDVAADELADFLSQYDLGELLSYKGIAEGVENSNFLLHTTKGSFILTLYEKRVAKNDLPFFLALMTHLAEHGVNCPLPVKGRDGEALRELSGRPAAIITFLEGVWPRKPNAAHCAGVGEGLARMHLAGANFAIRRANALSVAGWRPLFDAAASRADEVQPGLRAFLAAELDYLASGVWPTNLPEGVIHADLFNDNVFFLGDKLSGIIDFTFACNDMLAYDVAICLNAWCFEPDHSFNVTKARAFLNAYGRVRKLSEAEEAALPLLARGAAIRFLLTRLVDWLNVPPGALVRPKDPLEYVRKLRFHQSVSSVRDYGLMPSGLVA.

This sequence belongs to the pseudomonas-type ThrB family.

It catalyses the reaction L-homoserine + ATP = O-phospho-L-homoserine + ADP + H(+). It participates in amino-acid biosynthesis; L-threonine biosynthesis; L-threonine from L-aspartate: step 4/5. In Bradyrhizobium diazoefficiens (strain JCM 10833 / BCRC 13528 / IAM 13628 / NBRC 14792 / USDA 110), this protein is Homoserine kinase.